The following is a 112-amino-acid chain: Mitochondrial import inner membrane translocase subunit TIM14-3 (112 aa).

The residue at position 2 (Ala2) is an N-acetylalanine. The chain crosses the membrane as a helical span at residues 6 to 28 (IAGAAVAAAAVAGRYGILAWQAF). The region spanning 53 to 112 (EAALILGVRESVVADKVKEAHRRVMVANHPDAGGSHYLASKINEAKDMMLGKSNNSGSAF) is the J domain.

This sequence belongs to the TIM14 family. Probable component of the PAM complex at least composed of a mitochondrial HSP70 protein, TIMM44 and TIMM14. The complex interacts with the TIMM23 component of the TIM17:23 complex.

Its subcellular location is the mitochondrion. The protein resides in the mitochondrion inner membrane. In terms of biological role, component of the PAM complex, a complex required for the translocation of transit peptide-containing proteins from the inner membrane into the mitochondrial matrix in an ATP-dependent manner. The polypeptide is Mitochondrial import inner membrane translocase subunit TIM14-3 (TIM14-3) (Arabidopsis thaliana (Mouse-ear cress)).